The primary structure comprises 101 residues: DGIWTQLIFTLVKNLATLWQSGDFQFLDHECHYRIKPTFRRLKWKYKGKFWCPSWTSITGRATKSSRSGAVEHSVRNFVGQAKSSGLITQRQAEQFISQYN.

A disulfide bridge connects residues Cys-31 and Cys-52.

Functionally, binds tightly to LPS and thus specifically inhibits the LPS-mediated activation of the hemolymph coagulation. It has a strong antibacterial effect especially on the growth of Gram-negative bacteria. The sequence is that of Anti-lipopolysaccharide factor from Limulus polyphemus (Atlantic horseshoe crab).